The sequence spans 121 residues: MDSFTRASLITFLILLTLTSLVFSNGCMMRGGCFKTSEDAHRLIMQVDFYICGNAIFDTFMDVCRPGPRRRKRDLRRKLGIVMDRKESHKFLRRRKRRVYDIVEECCMEGCIVEEVSEYCD.

Positions 1–24 are cleaved as a signal peptide; the sequence is MDSFTRASLITFLILLTLTSLVFS. Positions 25–45 are excised as a propeptide; it reads NGCMMRGGCFKTSEDAHRLIM. Disulfide bonds link C52–C107, C64–C120, and C106–C111. A propeptide spans 69–97 (c peptide); that stretch reads RRRKRDLRRKLGIVMDRKESHKFLRRRKR.

It belongs to the insulin family.

It is found in the secreted. In terms of biological role, insulin decreases blood glucose concentration. May have evolved to activate insulin receptors (INSR) in vertebrates. Molecular docking studies reveals unique interaction with the human insulin receptor. In vivo, insulin-like peptide injection reduces blood glucose levels in two models of zebrafish diabetes (streptozotocin- and glucose-induced). Also shorter swimming distance of zebrafish larvae, an effect which is not observed with human insulin. In Exaiptasia diaphana (Tropical sea anemone), this protein is Insulin-like peptide 01.